The sequence spans 478 residues: MSGKIMFGTARSFTLALYDVRVRRLCMRNYSREWAPSSAAETTDADRLGHPQNVTAEADKMRKALILIENTRTNGRSYVEAVRRLRLHPIILAADPALYDYVAAERIEVARVDTTNLDALIGEYSRLGKSFDIAGVTSAAESFYATVGKICRNFNLPGPDPESIEQCCNKAAQRQVLAAAGVPVPGYRSATTAAEVQCVAAEIGLPAVLKPAVGSGSRGVRLCRDARELAEHTDYLLGGKHMWRSSPEVLVEQFVDGPHYIAEIMGDEVIGIGITEYGPPPHFVFRQLTFPAPLTDEQYERAVDVVQRCLRALGLGWGPTNIEFRWTEVGPVVIEVNPRLAGNPDPQLVQLAFDVDLIGEHIKLAIGEQCNLSKRQSRTATARSLIADRDGTLDYIDGIDRAAAIPGVADVKLYVRPGTPIVRNGDYCDRIGYVVAVAPSRSSADTIIQRAVESIDWSISPFSDLHDQEQYTPLYFPD.

Positions 174 to 366 (RQVLAAAGVP…LIGEHIKLAI (193 aa)) constitute an ATP-grasp domain. An ATP-binding site is contributed by 214 to 219 (GSGSRG). The active site involves Arg339.

This is an uncharacterized protein from Sinorhizobium fredii (strain NBRC 101917 / NGR234).